A 198-amino-acid chain; its full sequence is Transcriptional regulator GfcR (198 aa).

Belongs to the purine/pyrimidine phosphoribosyltransferase family. GfcR subfamily.

This chain is Transcriptional regulator GfcR, found in Methanospirillum hungatei JF-1 (strain ATCC 27890 / DSM 864 / NBRC 100397 / JF-1).